We begin with the raw amino-acid sequence, 369 residues long: Anhydro-N-acetylmuramic acid kinase (369 aa).

An ATP-binding site is contributed by 12-19; that stretch reads GTSLDGVD.

Belongs to the anhydro-N-acetylmuramic acid kinase family.

The enzyme catalyses 1,6-anhydro-N-acetyl-beta-muramate + ATP + H2O = N-acetyl-D-muramate 6-phosphate + ADP + H(+). The protein operates within amino-sugar metabolism; 1,6-anhydro-N-acetylmuramate degradation. Its pathway is cell wall biogenesis; peptidoglycan recycling. Functionally, catalyzes the specific phosphorylation of 1,6-anhydro-N-acetylmuramic acid (anhMurNAc) with the simultaneous cleavage of the 1,6-anhydro ring, generating MurNAc-6-P. Is required for the utilization of anhMurNAc either imported from the medium or derived from its own cell wall murein, and thus plays a role in cell wall recycling. The sequence is that of Anhydro-N-acetylmuramic acid kinase from Escherichia coli O6:K15:H31 (strain 536 / UPEC).